Here is a 127-residue protein sequence, read N- to C-terminus: Large ribosomal subunit protein bL12 (127 aa).

This sequence belongs to the bacterial ribosomal protein bL12 family. In terms of assembly, homodimer. Part of the ribosomal stalk of the 50S ribosomal subunit. Forms a multimeric L10(L12)X complex, where L10 forms an elongated spine to which 2 to 4 L12 dimers bind in a sequential fashion. Binds GTP-bound translation factors.

In terms of biological role, forms part of the ribosomal stalk which helps the ribosome interact with GTP-bound translation factors. Is thus essential for accurate translation. The protein is Large ribosomal subunit protein bL12 of Syntrophotalea carbinolica (strain DSM 2380 / NBRC 103641 / GraBd1) (Pelobacter carbinolicus).